Reading from the N-terminus, the 97-residue chain is MSSEDDVIRVRLPDRKKGELFGVVTSMLGAGHIKVRCEDGVERLARIPGKMRKKIWIREGDVVIVVPWSFQKDRADIVWRYTNPQVEWLERKGYLKF.

An S1-like domain is found at 8–82 (IRVRLPDRKK…DRADIVWRYT (75 aa)).

Belongs to the eIF-1A family.

In terms of biological role, seems to be required for maximal rate of protein biosynthesis. Enhances ribosome dissociation into subunits and stabilizes the binding of the initiator Met-tRNA(I) to 40 S ribosomal subunits. This is Translation initiation factor 1A (eIF1A) from Archaeoglobus fulgidus (strain ATCC 49558 / DSM 4304 / JCM 9628 / NBRC 100126 / VC-16).